We begin with the raw amino-acid sequence, 618 residues long: MFDLEYQLKNLPDKPGVYLMKNNLGEIIYVGKAKILKNRVRQYFQKSQKHSEKVKAMVKNIEEFEYIITDSEIEALILECNLIKKYRPKYNILLKDDKHYPFIKVTLAEDFPRVISTRKVTKDGSKYFGPYVDGSSVKDIIELIKKTFPIRTCKKNIVEEAKAIRPCLNYQIGLCKAPCAQYIKKSEYRETIDDVIKLLSGKHLDIVENFKLNMEKAAENLEFEKAAMLRDKINIIEKIGEKQKIILNNFDNEDYISLYSDGKDTCFQVFFLRNGKIVGREHFIIEDTFDTNSSTLISNFLKEFYGGTAYIPKTIYVPNIEDEALLEQWLTLKKESKSTIKIPIKGEKKNILVLVEKNAKTTLENFKLKYLQEKALYDNVLKDLKNILRLQEEPIRIEAFDISNIQGFDSVGSMVVFEKGRAKPSDYRRFKINTVKGADDYKSMKEILTRRFQHGLSEIKSIQDRKLEFSSGKFSVFPDLILMDGGKGQINIALEVLNAFNIDIPVCGMVKDNKHRTRGLIYNGEEIIINKYGSVMKFITRVQDEVHRFAISYHRSLRGKNSFHSLLDDIPNIGEKRKKDLLFNFKSIDNIKKATYEELLSIPSMDKKSAECVLEFFK.

The 80-residue stretch at 13–92 (DKPGVYLMKN…IKKYRPKYNI (80 aa)) folds into the GIY-YIG domain. The 36-residue stretch at 204–239 (LDIVENFKLNMEKAAENLEFEKAAMLRDKINIIEKI) folds into the UVR domain.

It belongs to the UvrC family. In terms of assembly, interacts with UvrB in an incision complex.

It localises to the cytoplasm. In terms of biological role, the UvrABC repair system catalyzes the recognition and processing of DNA lesions. UvrC both incises the 5' and 3' sides of the lesion. The N-terminal half is responsible for the 3' incision and the C-terminal half is responsible for the 5' incision. The protein is UvrABC system protein C of Clostridium botulinum (strain ATCC 19397 / Type A).